Consider the following 956-residue polypeptide: Calsyntenin-3 (956 aa).

A signal peptide spans 1 to 19 (MTLLLLPLLLASLLASCSC). Residues 1 to 30 (MTLLLLPLLLASLLASCSCNKANKHKPWIE) lie on the Cytoplasmic side of the membrane. The Extracellular portion of the chain corresponds to 20–847 (NKANKHKPWI…SHRNSMIPSA (828 aa)). 2 consecutive Cadherin domains span residues 29–145 (IEAE…APVF) and 146–246 (VERL…KPSW). An intramembrane region (helical) is located at residues 31–51 (AEYQGIVMENDNTVLLNPPLF). Residues 52–71 (ALDKDAPLRYAGEICGFRLH) are Cytoplasmic-facing. The segment at residues 72–94 (GSGVPFEAVILDKATGEGLIRAK) is an intramembrane region (helical). Residues 95–151 (EPVDCEAQKEHTFTIQAYDCGEGPDGANTKKSHKATVHVRVNDVNEFAPVFVERLYR) lie on the Cytoplasmic side of the membrane. The segment at residues 152 to 172 (AAVTEGKLYDRILRVEAIDGD) is an intramembrane region (helical). The Cytoplasmic segment spans residues 173–255 (CSPQYSQICY…WQGWNKRIEY (83 aa)). A helical membrane pass occupies residues 256–276 (APGAGSLALFPGIRLETCDEP). At 277-364 (LWNIQATIEL…PLGGPSGLGS (88 aa)) the chain is on the lumenal side. Residues N299, N327, N347, N507, and N740 are each glycosylated (N-linked (GlcNAc...) asparagine). Residues 848 to 868 (ATLIIVVCVGFLVLMVVLGLV) form a helical membrane-spanning segment. Residues 869 to 956 (RIHSLHRRVS…RIIETPPHRY (88 aa)) are Cytoplasmic-facing. The disordered stretch occupies residues 916–956 (QSCVTGAVGGQQEDEDSSDSEVADSPSSDERRIIETPPHRY). Residues 927 to 937 (QEDEDSSDSEV) show a composition bias toward acidic residues. Positions 943-956 (SDERRIIETPPHRY) are enriched in basic and acidic residues.

The protein belongs to the calsyntenin family. As to quaternary structure, interacts (via cadherin domains) with both alpha and beta isoforms of neurexins (NRXN1, NRXN2 and NRXN3). Directly interacts with APBA2. Forms a tripartite complex with APBA2 and APP. Interacts with low affinity with KLC1. Interacts with SLC23A2/SVCT2. In terms of assembly, interacts with CIDEA; inhibiting the lipid transferase activity of CIDEA. Interacts with CIDEC; inhibiting the lipid transferase activity of CIDEC. In terms of processing, proteolytically processed under normal cellular conditions. A primary zeta-cleavage generates a large extracellular (soluble) N-terminal domain (sAlc) and a short C-terminal transmembrane fragment (CTF1). A secondary cleavage catalyzed by gamma-secretase within the transmembrane domain releases the beta-Alc-beta chain in the extracellular milieu and produces an intracellular fragment (AlcICD). This processing is strongly suppressed in the tripartite complex formed with APBA2 and APP, which seems to prevent the association with gamma-secretase. Ubiquitinated: endoplasmic reticulum-localized protein is ubiquitinated and degraded by the endoplasmic reticulum-associated degradation (ERAD) pathway. According to PubMed:12498782, expressed predominantly in the brain and in kidney. Low levels in heart, skeletal muscle, liver, placenta, pancreas and lung. According to PubMed:12972431, predominant expression in brain, and only marginal in kidney. In brain, present throughout all cortical layers, highest levels in GABAergic neurons (based on morphology and distribution pattern). In terms of tissue distribution, expression is restricted to adipose tissue, with high expression in multilocular thermogenic adipocytes (brown adipose tissue).

It is found in the postsynaptic cell membrane. The protein resides in the endoplasmic reticulum membrane. The protein localises to the golgi apparatus membrane. It localises to the cell projection. Its subcellular location is the dendrite. It is found in the lipid droplet. Its function is as follows. Postsynaptic adhesion molecule that binds to presynaptic neurexins to mediate both excitatory and inhibitory synapse formation. Promotes synapse development by acting as a cell adhesion molecule at the postsynaptic membrane, which associates with both neurexin-alpha and neurexin-beta proteins at the presynaptic membrane. Regulates the balance between excitatory and inhibitory synapses by inhibiting formation of excitatory parallel-fiber synapses and promoting formation of inhibitory synapses in the same neuron. May also be involved in ascorbate (vitamin C) uptake via its interaction with SLC23A2/SVCT2. Complex formation with APBA2 and APP, stabilizes APP metabolism and enhances APBA2-mediated suppression of beta-APP40 secretion, due to the retardation of intracellular APP maturation. Functionally, adipose-specific isoform that plays a key role in adaptive thermogenesis. Facilitates the efficient use of stored triglyceride by promoting multilocular morphology of thermogenic adipocytes: acts by inhibiting the activity of CIDEA and CIDEC on lipid droplets, thereby preventing lipid droplet fusion and facilitating lipid utilization. May also participate in adaptive thermogenesis by promoting sympathetic innervation of thermogenic adipose tissue: acts by driving secretion of neurotrophic factor S100B from brown adipocytes, stimulating neurite outgrowth from sympathetic neurons. The sequence is that of Calsyntenin-3 from Homo sapiens (Human).